Reading from the N-terminus, the 217-residue chain is Proteasome subunit beta type-6-A like protein (217 aa).

Positions Met-1 to Gly-16 are cleaved as a propeptide — removed in mature form. The active-site Nucleophile is Thr-17.

The protein belongs to the peptidase T1B family. In terms of assembly, the 26S proteasome consists of a 20S proteasome core and two 19S regulatory subunits. The 20S proteasome core is composed of 28 subunits that are arranged in four stacked rings, resulting in a barrel-shaped structure. The two end rings are each formed by seven alpha subunits, and the two central rings are each formed by seven beta subunits. The catalytic chamber with the active sites is on the inside of the barrel.

It is found in the cytoplasm. The protein resides in the nucleus. The enzyme catalyses Cleavage of peptide bonds with very broad specificity.. Functionally, the proteasome is a multicatalytic proteinase complex which is characterized by its ability to cleave peptides with Arg, Phe, Tyr, Leu, and Glu adjacent to the leaving group at neutral or slightly basic pH. The proteasome has an ATP-dependent proteolytic activity. This subunit is involved in antigen processing to generate class I binding peptides. This chain is Proteasome subunit beta type-6-A like protein (psmb6l-a), found in Salmo salar (Atlantic salmon).